The chain runs to 115 residues: Large ribosomal subunit protein bL20 (115 aa).

The protein belongs to the bacterial ribosomal protein bL20 family.

Functionally, binds directly to 23S ribosomal RNA and is necessary for the in vitro assembly process of the 50S ribosomal subunit. It is not involved in the protein synthesizing functions of that subunit. The sequence is that of Large ribosomal subunit protein bL20 from Methylococcus capsulatus (strain ATCC 33009 / NCIMB 11132 / Bath).